Here is a 154-residue protein sequence, read N- to C-terminus: MENVPGSFGTSASFALRFGQTIFSAASLIFMCFDYDFYDFTTFCYLATVMAIVTPWSILLALTDTYSVLVKLLPQELRVLSIVFAGDFVLSFLSLGGACAVASATELLASADGKICDGNLCIQYQVSAALAFLCWFLLLASALFNFWSLPSLYY.

The Cytoplasmic segment spans residues 1-12 (MENVPGSFGTSA). Residues 13 to 33 (SFALRFGQTIFSAASLIFMCF) traverse the membrane as a helical segment. Residues 34-41 (DYDFYDFT) lie on the Extracellular side of the membrane. A helical transmembrane segment spans residues 42-62 (TFCYLATVMAIVTPWSILLAL). The Cytoplasmic segment spans residues 63 to 81 (TDTYSVLVKLLPQELRVLS). A helical transmembrane segment spans residues 82-102 (IVFAGDFVLSFLSLGGACAVA). The Extracellular portion of the chain corresponds to 103 to 128 (SATELLASADGKICDGNLCIQYQVSA). A helical membrane pass occupies residues 129–149 (ALAFLCWFLLLASALFNFWSL). Residues 150 to 154 (PSLYY) are Cytoplasmic-facing.

It belongs to the Casparian strip membrane proteins (CASP) family. In terms of assembly, homodimer and heterodimers.

It is found in the cell membrane. This Arabidopsis lyrata subsp. lyrata (Lyre-leaved rock-cress) protein is CASP-like protein ARALYDRAFT_485429.